The chain runs to 229 residues: Tubulin-specific chaperone B (229 aa).

One can recognise a CAP-Gly domain in the interval 170–212 (GATKFKEGVWVGVKYDEPVGKNDGSVAGVRYFDCDPKYGGFVR).

It belongs to the TBCB family. In terms of assembly, supercomplex made of cofactors A to E. Cofactors A and D function by capturing and stabilizing tubulin in a quasi-native conformation. Cofactor E binds to the cofactor D-tubulin complex; interaction with cofactor C then causes the release of tubulin polypeptides that are committed to the native state.

It localises to the cytoplasm. The protein resides in the cytoskeleton. Functionally, binds to alpha-tubulin folding intermediates after their interaction with cytosolic chaperonin in the pathway leading from newly synthesized tubulin to properly folded heterodimer. The sequence is that of Tubulin-specific chaperone B from Caenorhabditis elegans.